Consider the following 290-residue polypeptide: ATP synthase subunit a (290 aa).

The next 6 helical transmembrane spans lie at 44–64 (AFHV…ILLF), 104–124 (VIAP…AIDL), 161–181 (LSVF…GGFI), 194–214 (ILVQ…TLVA), 233–253 (VFIL…GMGV), and 260–280 (AVFH…LTIV).

This sequence belongs to the ATPase A chain family. As to quaternary structure, F-type ATPases have 2 components, CF(1) - the catalytic core - and CF(0) - the membrane proton channel. CF(1) has five subunits: alpha(3), beta(3), gamma(1), delta(1), epsilon(1). CF(0) has three main subunits: a(1), b(2) and c(9-12). The alpha and beta chains form an alternating ring which encloses part of the gamma chain. CF(1) is attached to CF(0) by a central stalk formed by the gamma and epsilon chains, while a peripheral stalk is formed by the delta and b chains.

The protein resides in the cell inner membrane. Functionally, key component of the proton channel; it plays a direct role in the translocation of protons across the membrane. The sequence is that of ATP synthase subunit a from Pseudomonas fluorescens (strain ATCC BAA-477 / NRRL B-23932 / Pf-5).